Reading from the N-terminus, the 116-residue chain is U16-barytoxin-Tl1f (116 aa).

The N-terminal stretch at 1 to 20 is a signal peptide; it reads MKTIIVFLSLLVLATKFGDA. Residues 21-74 constitute a propeptide that is removed on maturation; it reads NEGVNQEQMKEVIQNEFREDFLNEMAPMSLLQQLEAIESTLLEKEADRNSRQKR. Disulfide bonds link cysteine 75–cysteine 90, cysteine 82–cysteine 95, and cysteine 89–cysteine 110. Residue asparagine 85 is glycosylated (N-linked (GlcNAc...) asparagine).

The protein belongs to the neurotoxin 14 (magi-1) family. 06 (ICK-Trit) subfamily. Expressed by the venom gland.

The protein localises to the secreted. Ion channel inhibitor. The chain is U16-barytoxin-Tl1f from Trittame loki (Brush-footed trapdoor spider).